Reading from the N-terminus, the 92-residue chain is Small ribosomal subunit protein uS19 (92 aa).

It belongs to the universal ribosomal protein uS19 family.

Its function is as follows. Protein S19 forms a complex with S13 that binds strongly to the 16S ribosomal RNA. This is Small ribosomal subunit protein uS19 from Rhodopseudomonas palustris (strain HaA2).